Here is a 347-residue protein sequence, read N- to C-terminus: UDP-3-O-acylglucosamine N-acyltransferase (347 aa).

His241 serves as the catalytic Proton acceptor.

The protein belongs to the transferase hexapeptide repeat family. LpxD subfamily. Homotrimer.

The catalysed reaction is a UDP-3-O-[(3R)-3-hydroxyacyl]-alpha-D-glucosamine + a (3R)-hydroxyacyl-[ACP] = a UDP-2-N,3-O-bis[(3R)-3-hydroxyacyl]-alpha-D-glucosamine + holo-[ACP] + H(+). It functions in the pathway bacterial outer membrane biogenesis; LPS lipid A biosynthesis. Catalyzes the N-acylation of UDP-3-O-acylglucosamine using 3-hydroxyacyl-ACP as the acyl donor. Is involved in the biosynthesis of lipid A, a phosphorylated glycolipid that anchors the lipopolysaccharide to the outer membrane of the cell. This chain is UDP-3-O-acylglucosamine N-acyltransferase, found in Neisseria gonorrhoeae (strain ATCC 700825 / FA 1090).